A 221-amino-acid polypeptide reads, in one-letter code: NEDD4 family-interacting protein 1 (221 aa).

A2 carries the post-translational modification N-acetylalanine. The tract at residues 2 to 41 (ALALAALAAVEPACGSGYQQLQNEEEPGEPEQTAGDAPPP) is interaction with UBE2L3. Residues 2-116 (ALALAALAAV…TDQLRIGNDG (115 aa)) lie on the Cytoplasmic side of the membrane. Residues 18–44 (GYQQLQNEEEPGEPEQTAGDAPPPYSS) form a disordered region. 3 short sequence motifs (PPxY motif) span residues 39–42 (PPPY), 64–67 (PPSY), and 74–76 (PSY). The interaction with ITCH stretch occupies residues 42-76 (YSSITAESAAYFDYKDESGFPKPPSYNVATTLPSY). The helical transmembrane segment at 117 to 137 (IFMLTFFMAFLFNWIGFFLSF) threads the bilayer. The Extracellular portion of the chain corresponds to 138–143 (CLTTSA). The chain crosses the membrane as a helical span at residues 144 to 164 (AGRYGAISGFGLSLIKWILIV). The Cytoplasmic portion of the chain corresponds to 165–172 (RFSTYFPG). Residues 173–193 (YFDGQYWLWWVFLVLGFLLFL) form a helical membrane-spanning segment. At 194–221 (RGFINYAKVRKMPETFSNLPRTRVLFIY) the chain is on the extracellular side.

In terms of assembly, forms heterodimers with NDFIP2. Interacts with several E3 ubiquitin-protein ligases, including ITCH, NEDD4, NEDD4L and WWP2. The interaction with NEDD4, NEDD4L and ITCH leads to relocalization of these proteins to exosomes and eventually to exosomal secretion. Interacts with U2SURP. Interacts with SLC11A2/DMT1. Interacts with PTEN. May interact with phosphorylated EGFR. Interacts with BRAT1. Interacts with KCNH2. Interacts with MAVS. Part of a complex containing ITCH, NDFIP1 and MAP3K7. Interacts (via N-terminus) with UBE2L3; the interaction mediates recruitment of UBE2L3 to ITCH. Ubiquitinated by NEDD4; mono-, di- and polyubiquitinated forms are detected. Ubiquitination regulates its degradation. Post-translationally, undergoes transient tyrosine phosphorylation following EGF stimulation, most probably by catalyzed by SRC. Phosphorylation SRC is enhanced in the presence of NDFIP2 which may act as a scaffold to recruit SRC to NDFIP1. Highly expressed in embryonic and early postnatal cortex (at protein level). Widely expressed. Hardly detectable in resting T-cells; up-regulated in T-cells in response to activation.

Its subcellular location is the endosome membrane. The protein resides in the golgi apparatus membrane. It localises to the synapse. It is found in the synaptosome. The protein localises to the cell projection. Its subcellular location is the dendrite. The protein resides in the secreted. Activates HECT domain-containing E3 ubiquitin-protein ligases, including NEDD4 and ITCH, and consequently modulates the stability of their targets. As a result, controls many cellular processes. Prevents chronic T-helper cell-mediated inflammation by activating ITCH and thus controlling JUNB degradation. Promotes pancreatic beta cell death through degradation of JUNB and inhibition of the unfolded protein response, leading to reduction of insulin secretion. Restricts the production of pro-inflammatory cytokines in effector Th17 T-cells by promoting ITCH-mediated ubiquitination and degradation of RORC. Together with NDFIP2, limits the cytokine signaling and expansion of effector Th2 T-cells by promoting degradation of JAK1, probably by ITCH- and NEDD4L-mediated ubiquitination. Regulates peripheral T-cell tolerance to self and foreign antigens, forcing the exit of naive CD4+ T-cells from the cell cycle before they become effector T-cells. Negatively regulates RLR-mediated antiviral response by promoting SMURF1-mediated ubiquitination and subsequent degradation of MAVS. Negatively regulates KCNH2 potassium channel activity by decreasing its cell-surface expression and interfering with channel maturation through recruitment of NEDD4L to the Golgi apparatus where it mediates KCNH2 degradation. In cortical neurons, mediates the ubiquitination of the divalent metal transporter SLC11A2/DMT1 by NEDD4L, leading to its down-regulation and protection of the cells from cobalt and iron toxicity. Important for normal development of dendrites and dendritic spines in cortex. Enhances the ubiquitination of BRAT1 mediated by: NEDD4, NEDD4L and ITCH and is required for the nuclear localization of ubiquitinated BRAT1. Enhances the ITCH-mediated ubiquitination of MAP3K7 by recruiting E2 ubiquitin-conjugating enzyme UBE2L3 to ITCH. Modulates EGFR signaling through multiple pathways. In particular, may regulate the ratio of AKT1-to-MAPK8 signaling in response to EGF, acting on AKT1 probably through PTEN destabilization and on MAPK8 through ITCH-dependent MAP2K4 inactivation. As a result, may control cell growth rate. Inhibits cell proliferation by promoting PTEN nuclear localization and changing its signaling specificity. This is NEDD4 family-interacting protein 1 (Ndfip1) from Mus musculus (Mouse).